The following is a 576-amino-acid chain: Arginine--tRNA ligase (576 aa).

Residues 132–142 (ANPTGPMHIGH) carry the 'HIGH' region motif.

Belongs to the class-I aminoacyl-tRNA synthetase family. As to quaternary structure, monomer.

The protein localises to the cytoplasm. The enzyme catalyses tRNA(Arg) + L-arginine + ATP = L-arginyl-tRNA(Arg) + AMP + diphosphate. This is Arginine--tRNA ligase from Ehrlichia ruminantium (strain Welgevonden).